The following is a 635-amino-acid chain: GTPase-GDP dissociation stimulator vimar (635 aa).

4 ARM repeats span residues 72 to 118, 346 to 391, 392 to 432, and 510 to 550; these read KSEV…NICY, TDSH…NLVI, PKPN…MTVD, and RSSL…ILSV.

As to quaternary structure, interacts with Miro.

The protein localises to the endoplasmic reticulum. The protein resides in the mitochondrion. It localises to the cytoplasm. Its subcellular location is the cytosol. Functionally, probably acts as a GEF (guanine nucleotide exchange factor) for the Rho family of small GTP-binding proteins (G proteins) that stimulates the dissociation of GDP to enable subsequent binding of GTP. May also chaperone the processing and/or trafficking of small GTPases independently of GEF activity. By interacting with Miro, promotes mitochondrial fission in response to high calcium concentrations. This chain is GTPase-GDP dissociation stimulator vimar, found in Drosophila melanogaster (Fruit fly).